The sequence spans 87 residues: Large ribosomal subunit protein bL27 (87 aa).

Residues 1-25 (MAHKKGASSSRNGRDSNAQRLGVKR) form a disordered region. The span at 7-19 (ASSSRNGRDSNAQ) shows a compositional bias: polar residues.

The protein belongs to the bacterial ribosomal protein bL27 family.

The protein is Large ribosomal subunit protein bL27 of Rhodococcus opacus (strain B4).